Reading from the N-terminus, the 155-residue chain is Peptide methionine sulfoxide reductase MsrB (155 aa).

The MsrB domain occupies 15 to 137 (REALIATLNA…NSVSLTFIPT (123 aa)). Residues cysteine 54, cysteine 57, cysteine 103, and cysteine 106 each coordinate Zn(2+). Residue cysteine 126 is the Nucleophile of the active site.

Belongs to the MsrB Met sulfoxide reductase family. It depends on Zn(2+) as a cofactor.

The enzyme catalyses L-methionyl-[protein] + [thioredoxin]-disulfide + H2O = L-methionyl-(R)-S-oxide-[protein] + [thioredoxin]-dithiol. The polypeptide is Peptide methionine sulfoxide reductase MsrB (Xylella fastidiosa (strain M23)).